Here is a 339-residue protein sequence, read N- to C-terminus: Phenylalanine--tRNA ligase alpha subunit (339 aa).

E250 is a binding site for Mg(2+).

The protein belongs to the class-II aminoacyl-tRNA synthetase family. Phe-tRNA synthetase alpha subunit type 1 subfamily. In terms of assembly, tetramer of two alpha and two beta subunits. Mg(2+) serves as cofactor.

Its subcellular location is the cytoplasm. The catalysed reaction is tRNA(Phe) + L-phenylalanine + ATP = L-phenylalanyl-tRNA(Phe) + AMP + diphosphate + H(+). This chain is Phenylalanine--tRNA ligase alpha subunit, found in Azobacteroides pseudotrichonymphae genomovar. CFP2.